We begin with the raw amino-acid sequence, 262 residues long: Co-chaperone protein DjlA (262 aa).

At 1–6 (MRFWGK) the chain is on the periplasmic side. The helical transmembrane segment at 7-30 (FFGFVIGFMFGRFFGALLGLWLGH) threads the bilayer. Residues 31–262 (LYDKRPGGGA…DRVKSERGMR (232 aa)) are Cytoplasmic-facing. In terms of domain architecture, J spans 196 to 262 (DAYHLLGITA…DRVKSERGMR (67 aa)).

Homodimer.

The protein localises to the cell inner membrane. Functionally, regulatory DnaK co-chaperone. Direct interaction between DnaK and DjlA is needed for the induction of the wcaABCDE operon, involved in the synthesis of a colanic acid polysaccharide capsule, possibly through activation of the RcsB/RcsC phosphotransfer signaling pathway. The colanic acid capsule may help the bacterium survive conditions outside the host. The protein is Co-chaperone protein DjlA of Shewanella oneidensis (strain ATCC 700550 / JCM 31522 / CIP 106686 / LMG 19005 / NCIMB 14063 / MR-1).